A 440-amino-acid chain; its full sequence is Chromosome partition protein MukF (440 aa).

The segment at 208–236 (LSETSGTLRELQDTLEAAGDKLQANLLRI) is leucine-zipper.

Belongs to the MukF family. As to quaternary structure, interacts, and probably forms a ternary complex, with MukE and MukB via its C-terminal region. The complex formation is stimulated by calcium or magnesium. It is required for an interaction between MukE and MukB.

The protein localises to the cytoplasm. The protein resides in the nucleoid. In terms of biological role, involved in chromosome condensation, segregation and cell cycle progression. May participate in facilitating chromosome segregation by condensation DNA from both sides of a centrally located replisome during cell division. Not required for mini-F plasmid partitioning. Probably acts via its interaction with MukB and MukE. Overexpression results in anucleate cells. It has a calcium binding activity. This Escherichia fergusonii (strain ATCC 35469 / DSM 13698 / CCUG 18766 / IAM 14443 / JCM 21226 / LMG 7866 / NBRC 102419 / NCTC 12128 / CDC 0568-73) protein is Chromosome partition protein MukF.